The sequence spans 198 residues: MAAKKPTGRRVDGWKAKSWYKVYSPDNVGKVYLGDTVADDPSKLMGRVMQAPLSELVNDYTKQNVKMKFAITNVAGDAAYTSFIGHELARDFIRSLVKRRTSRIDCVVNFVSKDGCKVRATVTCFTLTRADQSQQHEIRKILTDDVLTFGKENELGVFVNNIINGDLAKELFKKVKELHPVRRVEVIKTKVELPKSSA.

This sequence belongs to the eukaryotic ribosomal protein eS1 family.

The sequence is that of Small ribosomal subunit protein eS1 from Methanospirillum hungatei JF-1 (strain ATCC 27890 / DSM 864 / NBRC 100397 / JF-1).